Here is a 175-residue protein sequence, read N- to C-terminus: ATP synthase subunit b (175 aa).

The chain crosses the membrane as a helical span at residues 20 to 40 (LIFWTAITFVIVLLILKKIAW).

This sequence belongs to the ATPase B chain family. In terms of assembly, F-type ATPases have 2 components, F(1) - the catalytic core - and F(0) - the membrane proton channel. F(1) has five subunits: alpha(3), beta(3), gamma(1), delta(1), epsilon(1). F(0) has four main subunits: a(1), b(2) and c(10-14). The alpha and beta chains form an alternating ring which encloses part of the gamma chain. F(1) is attached to F(0) by a central stalk formed by the gamma and epsilon chains, while a peripheral stalk is formed by the delta and b chains.

Its subcellular location is the cell inner membrane. In terms of biological role, f(1)F(0) ATP synthase produces ATP from ADP in the presence of a proton or sodium gradient. F-type ATPases consist of two structural domains, F(1) containing the extramembraneous catalytic core and F(0) containing the membrane proton channel, linked together by a central stalk and a peripheral stalk. During catalysis, ATP synthesis in the catalytic domain of F(1) is coupled via a rotary mechanism of the central stalk subunits to proton translocation. Component of the F(0) channel, it forms part of the peripheral stalk, linking F(1) to F(0). The chain is ATP synthase subunit b from Chlorobium chlorochromatii (strain CaD3).